The primary structure comprises 142 residues: MVLSAADKTNVKGVFSKIGGHAEEYGAETLERMFIAYPQTKTYFPHFDLSHGSAQIKAHGKKVAAALVEAVNHVDDIAGALSKLSDLHAQKLRVDPVNFKFLGHCFLVVVAIHHPAALTPEVHASLDKFMCAVGAVLTAKYR.

The Globin domain maps to 2–142 (VLSAADKTNV…VGAVLTAKYR (141 aa)). Histidine 59 is a binding site for O2. Histidine 88 contributes to the heme b binding site.

The protein belongs to the globin family. Heterotetramer of two alpha chains and two beta chains. In terms of tissue distribution, red blood cells.

Functionally, involved in oxygen transport from the lung to the various peripheral tissues. This Anas platyrhynchos (Mallard) protein is Hemoglobin subunit alpha-A (HBAA).